We begin with the raw amino-acid sequence, 238 residues long: tRNA (guanine-N(7)-)-methyltransferase (238 aa).

S-adenosyl-L-methionine is bound by residues Glu70, Asp95, Asp122, and Asp145. Residue Asp145 is part of the active site. Substrate contacts are provided by residues Lys149, Asp181, and 216 to 219 (TKFE).

This sequence belongs to the class I-like SAM-binding methyltransferase superfamily. TrmB family.

The enzyme catalyses guanosine(46) in tRNA + S-adenosyl-L-methionine = N(7)-methylguanosine(46) in tRNA + S-adenosyl-L-homocysteine. The protein operates within tRNA modification; N(7)-methylguanine-tRNA biosynthesis. Functionally, catalyzes the formation of N(7)-methylguanine at position 46 (m7G46) in tRNA. In Neisseria gonorrhoeae (strain ATCC 700825 / FA 1090), this protein is tRNA (guanine-N(7)-)-methyltransferase.